Reading from the N-terminus, the 123-residue chain is Con-ikot-ikot (123 aa).

The signal sequence occupies residues 1-18; that stretch reads MAMNMSMTLCMFVMVVVA. Positions 19 to 37 are excised as a propeptide; the sequence is ATVIDSTQLQEPDLSRMRR. Intrachain disulfides connect C49–C80, C50–C89, C57–C72, C90–C118, and C96–C113.

In terms of assembly, homodimer; disulfide-linked. Expressed by the venom duct.

The protein localises to the secreted. Functionally, potently and selectively blocks the desensitization of ionotropic glutamate AMPA receptors (GRIA1, GRIA2, GRIA3 and GRIA4). Binds to a different site than does the drug cyclothiazide. The toxin acts like a straitjacket on the 'gating ring' of the ligand-binding domain (LBD) of the receptor. It does so by restraining the domains via both intra- and interdimer cross-links such that agonist-induced closure of the LBD 'clamshells' is transduced into an irislike expansion of the gating ring. Compared to other desensitization blockers, it is a poor stabilizer of the open channel because toxin-bound AMPA receptors undergo frequent brief closures. In vitro, application of the toxin to hippocampal slices causes a large and rapid increase in resting AMPA receptor-mediated current leading to neuronal death. The sequence is that of Con-ikot-ikot from Conus striatus (Striated cone).